A 268-amino-acid chain; its full sequence is MERYEQLFKQLESRKQGAFVPFVTLGDPTPELSLKIIDALITGGADALELSIPFSDPLADGPTIQNANLRAFSSNVTPTLCFELLTKIRAKYPDIPIGLLMYANLVFHHGIDEFYRRCKDTDIDSVLVADVPMSESRPFRTAAMKHGIAPIFICPPDAEDELLREIASYGRGYTYLLSRAGVTGIERRGEKPLNHLVNKLREYHAAPPLQGFGISEPKQVKETLASGAAGAISGSAIVKIIEENLSQPEIMLKELTEFVSKMKSATQL.

Active-site proton acceptor residues include glutamate 49 and aspartate 60.

The protein belongs to the TrpA family. Tetramer of two alpha and two beta chains.

It catalyses the reaction (1S,2R)-1-C-(indol-3-yl)glycerol 3-phosphate + L-serine = D-glyceraldehyde 3-phosphate + L-tryptophan + H2O. It participates in amino-acid biosynthesis; L-tryptophan biosynthesis; L-tryptophan from chorismate: step 5/5. In terms of biological role, the alpha subunit is responsible for the aldol cleavage of indoleglycerol phosphate to indole and glyceraldehyde 3-phosphate. The chain is Tryptophan synthase alpha chain from Photorhabdus laumondii subsp. laumondii (strain DSM 15139 / CIP 105565 / TT01) (Photorhabdus luminescens subsp. laumondii).